Consider the following 173-residue polypeptide: DNA-directed RNA polymerase subunit delta (173 aa).

The HTH HARE-type domain maps to 14 to 81; sequence MALVEIAHEL…SDQTWGLRSW (68 aa). The tract at residues 110 to 173 is disordered; it reads LDLDEFEEID…DYDDEEEEIK (64 aa).

The protein belongs to the RpoE family. RNAP is composed of a core of 2 alpha, a beta and a beta' subunit. The core is associated with a delta subunit, and at least one of epsilon or omega. When a sigma factor is associated with the core the holoenzyme is formed, which can initiate transcription.

Functionally, participates in both the initiation and recycling phases of transcription. In the presence of the delta subunit, RNAP displays an increased specificity of transcription, a decreased affinity for nucleic acids, and an increased efficiency of RNA synthesis because of enhanced recycling. May function in sigma factor switching. It displaces RNA bound to RNA polymerase in a binary complex. The polypeptide is DNA-directed RNA polymerase subunit delta (Bacillus subtilis (strain 168)).